A 129-amino-acid chain; its full sequence is Large ribosomal subunit protein bL21 (129 aa).

Belongs to the bacterial ribosomal protein bL21 family. As to quaternary structure, part of the 50S ribosomal subunit. Contacts protein L20.

Its function is as follows. This protein binds to 23S rRNA in the presence of protein L20. In Prochlorococcus marinus (strain MIT 9313), this protein is Large ribosomal subunit protein bL21.